The primary structure comprises 24 residues: LEEQSFSFTKFSTDQQNLILQAHY.

This sequence belongs to the leguminous lectin family. Homotetramer.

Agglutinates erythrocytes of blood group A. Binds in decreasing order of affinity: N-acetyl-D-galactosamine, D-galactose, and D-galactosamine. This is Lectin from Crotalaria pallida (Smooth rattlebox).